The following is a 363-amino-acid chain: DNA replication and repair protein RecF (363 aa).

Residue 30 to 37 (GPNGSGKT) participates in ATP binding.

It belongs to the RecF family.

It is found in the cytoplasm. In terms of biological role, the RecF protein is involved in DNA metabolism; it is required for DNA replication and normal SOS inducibility. RecF binds preferentially to single-stranded, linear DNA. It also seems to bind ATP. The polypeptide is DNA replication and repair protein RecF (Vibrio cholerae serotype O1 (strain ATCC 39541 / Classical Ogawa 395 / O395)).